The sequence spans 359 residues: Guanine nucleotide-binding protein G(q) subunit alpha (359 aa).

S-palmitoyl cysteine attachment occurs at residues Cys9 and Cys10. A G-alpha domain is found at 38 to 359 (RELKLLLLGT…QLNLKEYNLV (322 aa)). The interval 41–54 (KLLLLGTGESGKST) is G1 motif. The GTP site is built by Ser50, Gly51, Lys52, Ser53, Thr54, Ser156, Leu180, Arg181, and Arg183. Ser53 provides a ligand contact to Mg(2+). The interval 178–186 (DVLRVRVPT) is G2 motif. Thr186 contacts Mg(2+). The G3 motif stretch occupies residues 201–210 (FRMVDVGGQR). The residue at position 209 (Gln209) is a 5-glutamyl histamine. The segment at 270–277 (ILFLNKKD) is G4 motif. Residues Asn274, Lys275, Asp277, and Ala331 each coordinate GTP. A G5 motif region spans residues 329–334 (TCATDT).

The protein belongs to the G-alpha family. G(q) subfamily. In terms of assembly, g proteins are composed of 3 units; alpha, beta and gamma. The alpha chain contains the guanine nucleotide binding site. Interacts (GDP-bound form) with RIC8A (via C-terminus); promoting GNAQ folding and association with the plasma membrane. Binds NHERF1. Forms a complex with PECAM1 and BDKRB2. Interacts with GAS2L2. Palmitoylated by ZDHHC3 and ZDHHC7. Palmitoylation occurs in the Golgi and participates in the localization of GNAQ to the plasma membrane. In terms of processing, histaminylated at Gln-209 residues by TGM2.

It localises to the cell membrane. Its subcellular location is the golgi apparatus. It is found in the nucleus. The protein localises to the nucleus membrane. The catalysed reaction is GTP + H2O = GDP + phosphate + H(+). In terms of biological role, guanine nucleotide-binding proteins (G proteins) function as transducers downstream of G protein-coupled receptors (GPCRs) in numerous signaling cascades. The alpha chain contains the guanine nucleotide binding site and alternates between an active, GTP-bound state and an inactive, GDP-bound state. Signaling by an activated GPCR promotes GDP release and GTP binding. The alpha subunit has a low GTPase activity that converts bound GTP to GDP, thereby terminating the signal. Both GDP release and GTP hydrolysis are modulated by numerous regulatory proteins. Signaling is mediated via phospholipase C-beta-dependent inositol lipid hydrolysis for signal propagation: activates phospholipase C-beta: following GPCR activation, GNAQ activates PLC-beta (PLCB1, PLCB2, PLCB3 or PLCB4), leading to production of diacylglycerol (DAG) and inositol 1,4,5-trisphosphate (IP3). Required for platelet activation. Regulates B-cell selection and survival and is required to prevent B-cell-dependent autoimmunity. Regulates chemotaxis of BM-derived neutrophils and dendritic cells (in vitro). Transduces FFAR4 signaling in response to long-chain fatty acids (LCFAs). Together with GNA11, required for heart development. The chain is Guanine nucleotide-binding protein G(q) subunit alpha (Gnaq) from Mus musculus (Mouse).